The chain runs to 365 residues: tRNA/tmRNA (uracil-C(5))-methyltransferase (365 aa).

Positions 189, 217, 222, 238, and 298 each coordinate S-adenosyl-L-methionine. The Nucleophile role is filled by C323. The active-site Proton acceptor is the E357.

Belongs to the class I-like SAM-binding methyltransferase superfamily. RNA M5U methyltransferase family. TrmA subfamily.

It carries out the reaction uridine(54) in tRNA + S-adenosyl-L-methionine = 5-methyluridine(54) in tRNA + S-adenosyl-L-homocysteine + H(+). The catalysed reaction is uridine(341) in tmRNA + S-adenosyl-L-methionine = 5-methyluridine(341) in tmRNA + S-adenosyl-L-homocysteine + H(+). Functionally, dual-specificity methyltransferase that catalyzes the formation of 5-methyluridine at position 54 (m5U54) in all tRNAs, and that of position 341 (m5U341) in tmRNA (transfer-mRNA). This is tRNA/tmRNA (uracil-C(5))-methyltransferase from Shewanella sp. (strain ANA-3).